The sequence spans 575 residues: Carboxylesterase 5A (575 aa).

Residues 1 to 28 (MSGDWVRPGQALIWVIWIFGAIIEGSVT) form the signal peptide. Residues C94 and C121 are joined by a disulfide bond. N-linked (GlcNAc...) asparagine glycosylation occurs at N134. S226 functions as the Acyl-ester intermediate in the catalytic mechanism. Cysteines 280 and 291 form a disulfide. N281 carries an N-linked (GlcNAc...) asparagine glycan. Residue E345 is the Charge relay system of the active site. N363 carries N-linked (GlcNAc...) asparagine glycosylation. The active-site Charge relay system is H454. N-linked (GlcNAc...) asparagine glycosylation is present at N524.

The protein belongs to the type-B carboxylesterase/lipase family. Post-translationally, N-glycosylated.

Its subcellular location is the secreted. The catalysed reaction is a carboxylic ester + H2O = an alcohol + a carboxylate + H(+). Involved in the detoxification of xenobiotics and in the activation of ester and amide prodrugs. This Mus musculus (Mouse) protein is Carboxylesterase 5A (Ces5a).